A 629-amino-acid chain; its full sequence is Extracellular metalloproteinase 10 (629 aa).

The N-terminal stretch at M1–A19 is a signal peptide. The propeptide occupies H20–H240. N-linked (GlcNAc...) asparagine glycans are attached at residues N281 and N331. H424 contacts Zn(2+). E425 is a catalytic residue. Residue H428 coordinates Zn(2+). 2 N-linked (GlcNAc...) asparagine glycosylation sites follow: N469 and N617.

It belongs to the peptidase M36 family. The cofactor is Zn(2+).

It is found in the secreted. In terms of biological role, secreted metalloproteinase that allows assimilation of proteinaceous substrates and probably acts as a virulence factor. This chain is Extracellular metalloproteinase 10 (MEP10), found in Coccidioides posadasii (strain C735) (Valley fever fungus).